A 721-amino-acid chain; its full sequence is Protein mu-NS (721 aa).

Residues 1 to 13 are interaction with sigma-NS; it reads MASFKGFSANTVP. Positions 1–38 are RNA-binding; it reads MASFKGFSANTVPVSKAKRDISSLAATPGLRSQSFTPS. An interaction with mu-2 region spans residues 14 to 40; sequence VSKAKRDISSLAATPGLRSQSFTPSVD. Residues 471–721 form an involved in the formation of factory-like inclusions region; that stretch reads SNDVTDGIKL…IDFSVPTDEL (251 aa). Coiled coils occupy residues 522-559 and 628-684; these read PLLS…KSAQ and LMNG…ALNQ.

It belongs to the orthoreovirus mu-NS protein family. As to quaternary structure, interacts with mu-2. Interacts with sigma-NS; in viral factories. Interacts with the inner capsid proteins lambda-1 and sigma-2, and outer capsid protein lambda-2; in viral factories. Post-translationally, the N-terminus is blocked.

Its subcellular location is the host cytoplasm. Non-structural protein implicated with protein sigma-NS in forming the matrix of viral factories, which are large inclusions in the host cytoplasm where replication intermediates are assembled and viral RNA replication takes place. Together with mu-2, recruits the other core proteins to these factories. Binds RNA and recruits viral mRNAs to sites of viral replication. The chain is Protein mu-NS (M3) from Reovirus type 3 (strain Dearing) (T3D).